The sequence spans 598 residues: Eukaryotic translation initiation factor 3 subunit D (598 aa).

The tract at residues 104 to 178 is disordered; it reads VKTRGFGRGG…YDKPQRNRDS (75 aa). Over residues 109-132 the composition is skewed to gly residues; the sequence is FGRGGGTIFRGRGQRGGAQRGRGG. Residues 165–177 show a composition bias toward basic and acidic residues; the sequence is GWKDYDKPQRNRD. Positions 304-318 are RNA gate; it reads SIDLVTVNENAADAP. The disordered stretch occupies residues 574–598; it reads NTFEEEDDTGAKAEKDEESEEKDEE. Positions 589–598 are enriched in acidic residues; sequence DEESEEKDEE.

This sequence belongs to the eIF-3 subunit D family. As to quaternary structure, component of the eukaryotic translation initiation factor 3 (eIF-3) complex.

The protein resides in the cytoplasm. Its function is as follows. mRNA cap-binding component of the eukaryotic translation initiation factor 3 (eIF-3) complex, which is involved in protein synthesis of a specialized repertoire of mRNAs and, together with other initiation factors, stimulates binding of mRNA and methionyl-tRNAi to the 40S ribosome. The eIF-3 complex specifically targets and initiates translation of a subset of mRNAs involved in cell proliferation. In the eIF-3 complex, eif3d specifically recognizes and binds the 7-methylguanosine cap of a subset of mRNAs. This chain is Eukaryotic translation initiation factor 3 subunit D, found in Coccidioides immitis (strain RS) (Valley fever fungus).